The following is a 4513-amino-acid chain: Dynein-1-beta heavy chain, flagellar inner arm I1 complex (4513 aa).

Positions 1 to 1806 (MEPGDEGKGH…IVKQVLSVFY (1806 aa)) are stem. Coiled coils occupy residues 192–223 (KAAAKQKDLVQRLESTIIHWTRQVKELLNQQD), 1544–1577 (TAQGLLESFQDMNNKLERIQKSLDNYLENKRQQF), and 1704–1727 (THECEKALADADSARKNLKLLKKK). 4 AAA regions span residues 1807-2028 (YGYE…PIAR), 2089-2350 (RAIE…VPEN), 2458-2706 (FKPA…IIQG), and 2808-3059 (DYAL…LKRR). Residues 1845–1852 (GPAGTGKT), 2127–2134 (GRTGSGKS), 2497–2504 (GNVGVGKT), and 2848–2855 (GVGGSGRK) each bind ATP. Coiled-coil stretches lie at residues 3107–3193 (AAMK…LTKK), 3301–3384 (KRAK…SISE), and 3499–3519 (RLKVLNLQMSDMARQIENAIQ). The tract at residues 3107-3384 (AAMKKVAEEK…RVRWEASISE (278 aa)) is stalk. AAA regions lie at residues 3443-3674 (LANP…EVNA) and 3890-4109 (ATTY…LLKS).

As to quaternary structure, the I1 inner arm complex (also known as the f dynein complex) is a two-headed isoform composed of two heavy chains (1-alpha and 1-beta), three intermediate chains and three light chains. I1 occupies a specific position proximal to the first radial spoke and repeats every 96 nm along the length of the axoneme.

Its subcellular location is the cell projection. It is found in the cilium. It localises to the flagellum. The protein localises to the cytoplasm. The protein resides in the cytoskeleton. Its subcellular location is the flagellum axoneme. In terms of biological role, force generating protein of eukaryotic cilia and flagella. Produces force towards the minus ends of microtubules. Dynein has ATPase activity; the force-producing power stroke is thought to occur on release of ADP. Required for assembly of the I1 inner arm complex and its targeting to the appropriate axoneme location. Also required for phototaxis. The sequence is that of Dynein-1-beta heavy chain, flagellar inner arm I1 complex (DHC10) from Chlamydomonas reinhardtii (Chlamydomonas smithii).